Reading from the N-terminus, the 191-residue chain is Fe/S biogenesis protein NfuA (191 aa).

The [4Fe-4S] cluster site is built by Cys149 and Cys152.

It belongs to the NfuA family. As to quaternary structure, homodimer. [4Fe-4S] cluster serves as cofactor.

Involved in iron-sulfur cluster biogenesis. Binds a 4Fe-4S cluster, can transfer this cluster to apoproteins, and thereby intervenes in the maturation of Fe/S proteins. Could also act as a scaffold/chaperone for damaged Fe/S proteins. This Citrobacter koseri (strain ATCC BAA-895 / CDC 4225-83 / SGSC4696) protein is Fe/S biogenesis protein NfuA.